The sequence spans 272 residues: MTEVRRRGRPGQQEPSAQKGAQALERGIAILQYLEKSGGSSSVSDISLNLDLPLSTTFRLLKVLEGADFVYQDSQLGWWHIGLGAFNIGSAYIHNRDVLSVGGPFMRRLMLMSGETVNVAIRNGNEAVLIGQQECKSMVRMCAPLGSRLPLHASGAGKALLYPLPAEELVDVIVKTGLQRFTPTTIVDLPVLQRNLDEARACGYSIDQEEHVTGLNCIASAVYDDVGSVVAAISISGPASRLTPDRFVSQGELVRETARNISTALGLKPQAD.

Positions M1–G20 are disordered. One can recognise an HTH iclR-type domain in the interval A21 to L83. Residues V43–K62 constitute a DNA-binding region (H-T-H motif). In terms of domain architecture, IclR-ED spans V98 to L267. Residues S154–A156, D207, C217, and S234–S236 contribute to the glyoxylate site.

Its function is as follows. Negative regulator of allantoin and glyoxylate utilization operons. Binds to the gcl promoter and to the allS-allA intergenic region. The chain is HTH-type transcriptional repressor AllR (allR) from Klebsiella pneumoniae.